The following is a 1501-amino-acid chain: Ribulose bisphosphate carboxylase (1501 aa).

Asparagine 111 is a binding site for substrate. Lysine 166 serves as the catalytic Proton acceptor. Lysine 168 serves as a coordination point for substrate. Lysine 191, aspartate 193, and glutamate 194 together coordinate Mg(2+). An N6-carboxylysine modification is found at lysine 191. The active-site Proton acceptor is histidine 287. Residues arginine 288, histidine 321, and serine 368 each coordinate substrate. Positions 486–508 (SAAAFVGASVAPAKKENVVARQA) are cleaved as a propeptide — linker. Asparagine 619 contributes to the substrate binding site. Residue lysine 674 is the Proton acceptor of the active site. A substrate-binding site is contributed by lysine 676. Positions 699, 701, and 702 each coordinate Mg(2+). Lysine 699 carries the N6-carboxylysine modification. Catalysis depends on histidine 795, which acts as the Proton acceptor. The substrate site is built by arginine 796, histidine 829, and serine 876. Positions 994–1016 (SAAAFVGASVAPAKKENVVARQA) are cleaved as a propeptide — linker. Asparagine 1127 is a substrate binding site. Lysine 1182 acts as the Proton acceptor in catalysis. Lysine 1184 provides a ligand contact to substrate. The Mg(2+) site is built by lysine 1207, aspartate 1209, and glutamate 1210. The residue at position 1207 (lysine 1207) is an N6-carboxylysine. The active-site Proton acceptor is the histidine 1303. Positions 1304, 1337, and 1384 each coordinate substrate.

Belongs to the RuBisCO large chain family. Type II subfamily. Homodimer. Requires Mg(2+) as cofactor.

It is found in the plastid. The protein localises to the chloroplast. It catalyses the reaction 2 (2R)-3-phosphoglycerate + 2 H(+) = D-ribulose 1,5-bisphosphate + CO2 + H2O. The enzyme catalyses D-ribulose 1,5-bisphosphate + O2 = 2-phosphoglycolate + (2R)-3-phosphoglycerate + 2 H(+). RuBisCO catalyzes two reactions: the carboxylation of D-ribulose 1,5-bisphosphate, the primary event in carbon dioxide fixation, as well as the oxidative fragmentation of the pentose substrate. Both reactions occur simultaneously and in competition at the same active site. In Symbiodinium sp. (Dinoflagellate), this protein is Ribulose bisphosphate carboxylase (rbcL).